The sequence spans 517 residues: T-complex protein 11-like protein 2 (517 aa).

The tract at residues 1-59 is disordered; it reads MPFNGEKQYVNEDQQSDSESSRFSESTASLSDYGCSRQSFTSDSSSKSSSPASTSPPRG. S16 carries the phosphoserine modification. Over residues 17–55 the composition is skewed to low complexity; sequence DSESSRFSESTASLSDYGCSRQSFTSDSSSKSSSPASTS.

The protein belongs to the TCP11 family. Interacts with FMNL2; this interaction promotes muscle-derived satellite cell (MDSC) migration and differentiation.

The protein localises to the cytoplasm. It is found in the cytoskeleton. Its function is as follows. Promotes the migration of muscle-derived satellite cells (MDSCs) during differentiation throught interaction with FMNL2 and therefore may participate in microfilament assembly. The sequence is that of T-complex protein 11-like protein 2 from Rattus norvegicus (Rat).